We begin with the raw amino-acid sequence, 702 residues long: Serotransferrin-A (702 aa).

The first 19 residues, 1–19, serve as a signal peptide directing secretion; it reads MDLSLRVALCLSMLALCLA. Transferrin-like domains are found at residues 26–340 and 353–685; these read VRWC…ALKE and VRWC…SLNK. Disulfide bonds link Cys-29–Cys-64 and Cys-39–Cys-55. Positions 79 and 111 each coordinate Fe(3+). Intrachain disulfides connect Cys-134/Cys-217, Cys-179/Cys-192, and Cys-245/Cys-259. Thr-136, Lys-140, Ala-142, and Gly-143 together coordinate hydrogencarbonate. Fe(3+) is bound at residue Tyr-211. His-267 contributes to the Fe(3+) binding site. Residues 340-349 are connecting region; that stretch reads EGVKEDDSAA. Disulfide bonds link Cys-356/Cys-388 and Cys-366/Cys-379. Fe(3+) contacts are provided by Asp-403 and Tyr-442. Disulfide bonds link Cys-413-Cys-697, Cys-431-Cys-658, Cys-465-Cys-544, Cys-489-Cys-686, Cys-499-Cys-513, Cys-510-Cys-527, and Cys-584-Cys-598. Residues Thr-467, Arg-471, Ala-473, and Gly-474 each coordinate hydrogencarbonate. Residue Tyr-538 participates in Fe(3+) binding. His-606 is a binding site for Fe(3+).

The protein belongs to the transferrin family. Monomer. Plasma.

Its subcellular location is the secreted. Its function is as follows. Transferrins are iron binding transport proteins which can bind two Fe(3+) ions in association with the binding of an anion, usually bicarbonate. It is responsible for the transport of iron from sites of absorption and heme degradation to those of storage and utilization. Serum transferrin may also have a further role in stimulating cell proliferation. This is Serotransferrin-A (tf-a) from Xenopus laevis (African clawed frog).